Here is a 1249-residue protein sequence, read N- to C-terminus: Fanconi anemia group J protein (1249 aa).

In terms of domain architecture, Helicase ATP-binding spans 11 to 442 (GGVKIYFPYK…KDHEPLRAVC (432 aa)). Over residues 102–127 (QGTSRHFNYPSTPPSERNGTSSTCQD) the composition is skewed to polar residues. Positions 102 to 131 (QGTSRHFNYPSTPPSERNGTSSTCQDSPEK) are disordered. Residues 158–175 (KKRIRPLETTQQIRKRHC) carry the Nuclear localization signal motif. Position 185 to 192 (185 to 192 (AKVDSGKT)) interacts with ATP. 4 residues coordinate [4Fe-4S] cluster: Cys-283, Cys-298, Cys-310, and Cys-350. The DEAH box motif lies at 393–396 (DEAH). 7 positions are modified to phosphoserine: Ser-505, Ser-927, Ser-930, Ser-956, Ser-990, Ser-1004, and Ser-1032. The tract at residues 888–1063 (HQKVLNVSIK…ESSNLTVNTS (176 aa)) is interaction with BRCA1. 2 disordered regions span residues 1018 to 1042 (KATPELGSSENSASSPPRFKTEKME) and 1108 to 1127 (VSEEDKQSTSNRDFETEAED). Positions 1023–1032 (LGSSENSASS) are enriched in polar residues. Basic and acidic residues predominate over residues 1110 to 1122 (EEDKQSTSNRDFE). Ser-1237 is modified (phosphoserine). Lys-1249 is modified (N6-acetyllysine).

It belongs to the DEAD box helicase family. DEAH subfamily. As to quaternary structure, interacts with the replication protein A complex (RPA) via the RPA1 subunit; following DNA damage they colocalize in foci in the nucleus. Binds directly to the BRCT domains of BRCA1. Interacts with the CIA complex components CIAO1, CIAO2B and MMS19. [4Fe-4S] cluster serves as cofactor. Post-translationally, phosphorylated. Phosphorylation is necessary for interaction with BRCA1, and is cell-cycle regulated. In terms of processing, acetylation at Lys-1249 facilitates DNA end processing required for repair and checkpoint signaling. In terms of tissue distribution, ubiquitously expressed, with highest levels in testis.

It localises to the nucleus. Its subcellular location is the cytoplasm. The enzyme catalyses Couples ATP hydrolysis with the unwinding of duplex DNA at the replication fork by translocating in the 5'-3' direction. This creates two antiparallel DNA single strands (ssDNA). The leading ssDNA polymer is the template for DNA polymerase III holoenzyme which synthesizes a continuous strand.. The catalysed reaction is ATP + H2O = ADP + phosphate + H(+). Its activity is regulated as follows. Helicase activity on forked substrates is stimulated by replication protein A complex heterotrimer (RPA1, RPA2, RPA3). Helicase activity on G-quadruplex DNA is stimulated 3-fold by RPA, and inhibited by MSH2/MSH6. Unwinding of G-quadruplex DNA is inhibited by ATP-gamma-S and telomestatin (TMS); TMA does not inhibit unwinding of forked-duplex DNA. Helicase activity on dsDNA and G-quadruplex DNA is inhibited by porphyrin derivatives meso-tetra (N-methyl-4-pyridyl) porphine tetra tosylate (T4) and N-methyl mesoporphyrin IX (NMM). Its function is as follows. DNA-dependent ATPase and 5'-3' DNA helicase required for the maintenance of chromosomal stability. Acts late in the Fanconi anemia pathway, after FANCD2 ubiquitination. Involved in the repair of DNA double-strand breaks by homologous recombination in a manner that depends on its association with BRCA1. Involved in the repair of abasic sites at replication forks by promoting the degradation of DNA-protein cross-links: acts by catalyzing unfolding of HMCES DNA-protein cross-link via its helicase activity, exposing the underlying DNA and enabling cleavage of the DNA-protein adduct by the SPRTN metalloprotease. Can unwind RNA:DNA substrates. Unwinds G-quadruplex DNA; unwinding requires a 5'-single stranded tail. The sequence is that of Fanconi anemia group J protein from Homo sapiens (Human).